The sequence spans 419 residues: N-acylneuraminate cytidylyltransferase (419 aa).

The protein belongs to the CMP-NeuNAc synthase family. Monomer. May form aggregates. The cofactor is Mg(2+). Mn(2+) serves as cofactor.

The protein localises to the cytoplasm. It catalyses the reaction an N-acylneuraminate + CTP = a CMP-N-acyl-beta-neuraminate + diphosphate. Its activity is regulated as follows. Inhibited by the CTP analogs 5-mercuri-CTP and CTP-2',3'-dialdehyde. Its function is as follows. Catalyzes the formation of CMP-N-acetylneuraminic acid (CMP-NeuNAc), which is essential for the formation of the capsule. In Escherichia coli O18:K1:H7 (strain RS218 / NMEC), this protein is N-acylneuraminate cytidylyltransferase (neuA).